Consider the following 424-residue polypeptide: Serine--tRNA ligase (424 aa).

229-231 (TAE) serves as a coordination point for L-serine. 260–262 (RRE) is an ATP binding site. Position 283 (glutamate 283) interacts with L-serine. Residue 347–350 (EVSS) participates in ATP binding. Serine 383 is an L-serine binding site.

The protein belongs to the class-II aminoacyl-tRNA synthetase family. Type-1 seryl-tRNA synthetase subfamily. As to quaternary structure, homodimer. The tRNA molecule binds across the dimer.

Its subcellular location is the cytoplasm. It carries out the reaction tRNA(Ser) + L-serine + ATP = L-seryl-tRNA(Ser) + AMP + diphosphate + H(+). The enzyme catalyses tRNA(Sec) + L-serine + ATP = L-seryl-tRNA(Sec) + AMP + diphosphate + H(+). It participates in aminoacyl-tRNA biosynthesis; selenocysteinyl-tRNA(Sec) biosynthesis; L-seryl-tRNA(Sec) from L-serine and tRNA(Sec): step 1/1. In terms of biological role, catalyzes the attachment of serine to tRNA(Ser). Is also able to aminoacylate tRNA(Sec) with serine, to form the misacylated tRNA L-seryl-tRNA(Sec), which will be further converted into selenocysteinyl-tRNA(Sec). This Roseiflexus castenholzii (strain DSM 13941 / HLO8) protein is Serine--tRNA ligase.